Here is a 359-residue protein sequence, read N- to C-terminus: Histamine H2 receptor (359 aa).

The Extracellular portion of the chain corresponds to 1–22 (MAPNGTASSFCLDSTACKITIT). An N-linked (GlcNAc...) asparagine glycan is attached at Asn-4. A helical transmembrane segment spans residues 23 to 44 (VVLAVLILITVAGNVVVCLAVG). Topologically, residues 45-57 (LNRRLRNLTNCFI) are cytoplasmic. The helical transmembrane segment at 58-81 (VSLAITDLLLGLLVLPFSAIYQLS) threads the bilayer. Residues 82–92 (CKWSFGKVFCN) are Extracellular-facing. A disulfide bond links Cys-91 and Cys-174. Residues 93–114 (IYTSLDVMLCTASILNLFMISL) form a helical membrane-spanning segment. The Cytoplasmic segment spans residues 115-134 (DRYCAVMDPLRYPVLVTPVR). Residues 135–159 (VAISLVLIWVISITLSFLSIHLGWN) traverse the membrane as a helical segment. Residues 160–180 (SRNETSKGNHTTSKCKVQVNE) lie on the Extracellular side of the membrane. A helical transmembrane segment spans residues 181–204 (VYGLVDGLVTFYLPLLIMCITYYR). Residues 205-234 (IFKVARDQAKRINHISSWKAATIREHKATV) lie on the Cytoplasmic side of the membrane. A helical membrane pass occupies residues 235-258 (TLAAVMGAFIICWFPYFTAFVYRG). Residues 259 to 267 (LRGDDAINE) are Extracellular-facing. Residues 268–289 (VLEAIVLWLGYANSALNPILYA) traverse the membrane as a helical segment. The Cytoplasmic portion of the chain corresponds to 290 to 359 (ALNRDFRTGY…VTAPQGATDR (70 aa)). A lipid anchor (S-palmitoyl cysteine) is attached at Cys-305. Residues 316 to 340 (SLRSNASQLSRTQSREPRQQEEKPL) are disordered. Residues 317–327 (LRSNASQLSRT) show a composition bias toward polar residues. Residues 328–340 (QSREPRQQEEKPL) show a composition bias toward basic and acidic residues.

It belongs to the G-protein coupled receptor 1 family.

It is found in the cell membrane. The H2 subclass of histamine receptors mediates gastric acid secretion. Also appears to regulate gastrointestinal motility and intestinal secretion. Possible role in regulating cell growth and differentiation. The activity of this receptor is mediated by G proteins which activate adenylyl cyclase and, through a separate G protein-dependent mechanism, the phosphoinositide/protein kinase (PKC) signaling pathway. The protein is Histamine H2 receptor (HRH2) of Gorilla gorilla gorilla (Western lowland gorilla).